A 567-amino-acid chain; its full sequence is Probable E3 ubiquitin-protein ligase ARI8 (567 aa).

The interval 1 to 27 is disordered; sequence MEADDDFYSGTENYSDYADSDEDDADG. A compositionally biased stretch (acidic residues) spans 18–27; it reads ADSDEDDADG. The TRIAD supradomain stretch occupies residues 124 to 337; it reads GELDCGICFE…GGFYACNRYE (214 aa). Zn(2+) is bound by residues Cys128, Cys131, Cys145, His147, Cys150, Cys153, Cys173, Cys178, Cys217, Cys222, Cys239, Cys241, Cys246, Cys249, His254, Cys259, Cys286, and Cys289. Residues 128-178 form an RING-type 1 zinc finger; the sequence is CGICFETFLSDKLHAAACGHPFCDSCWEGYITTAINDGPGCLTLRCPDPSC. An IBR-type zinc finger spans residues 197-259; it reads QKYTSYFVRS…AEEAHRPVDC (63 aa). The segment at 286–316 adopts an RING-type 2; atypical zinc-finger fold; sequence CPKCKRPIEKNQGCMHITCTPPCKFEFCWLC. Residue Cys299 is part of the active site. Positions 304, 308, 313, 316, 323, and 333 each coordinate Zn(2+). The interval 514-543 is disordered; it reads DAYDRTSSSKSLGGKTKGSSSKASSSDSSH. Low complexity predominate over residues 521 to 542; sequence SSKSLGGKTKGSSSKASSSDSS. The RanBP2-type zinc finger occupies 540-567; the sequence is DSSHWPCEYCTYVNPRSTTICQMCEHGR.

It belongs to the RBR family. Ariadne subfamily. Requires Zn(2+) as cofactor. As to expression, ubiquitous.

It catalyses the reaction [E2 ubiquitin-conjugating enzyme]-S-ubiquitinyl-L-cysteine + [acceptor protein]-L-lysine = [E2 ubiquitin-conjugating enzyme]-L-cysteine + [acceptor protein]-N(6)-ubiquitinyl-L-lysine.. Its pathway is protein modification; protein ubiquitination. Its function is as follows. Might act as an E3 ubiquitin-protein ligase, or as part of E3 complex, which accepts ubiquitin from specific E2 ubiquitin-conjugating enzymes and then transfers it to substrates. This Arabidopsis thaliana (Mouse-ear cress) protein is Probable E3 ubiquitin-protein ligase ARI8 (ARI8).